Here is a 323-residue protein sequence, read N- to C-terminus: rRNA 2'-O-methyltransferase fibrillarin (323 aa).

Positions 1–80 (MGFERGGRGG…AKGGAAGKKV (80 aa)) are disordered. Asymmetric dimethylarginine occurs at positions 5, 8, 12, 16, 23, 26, 30, 34, 41, 47, 49, 53, 57, 62, 64, and 68. Residues 8 to 76 (RGGARGGGRG…ARGGAKGGAA (69 aa)) show a composition bias toward gly residues. Residues 174–175 (TS), 193–194 (EF), 218–219 (DA), and 238–241 (DVAQ) each bind S-adenosyl-L-methionine.

Belongs to the methyltransferase superfamily. Fibrillarin family. As to quaternary structure, component of box C/D small nucleolar ribonucleoprotein (snoRNP) particles. Post-translationally, by homology to other fibrillarins, some or all of the N-terminal domain arginines are modified to asymmetric dimethylarginine (DMA).

It is found in the nucleus. The protein localises to the nucleolus. It carries out the reaction L-glutaminyl-[histone H2A] + S-adenosyl-L-methionine = N(5)-methyl-L-glutaminyl-[histone H2A] + S-adenosyl-L-homocysteine + H(+). Its function is as follows. S-adenosyl-L-methionine-dependent methyltransferase that has the ability to methylate both RNAs and proteins. Involved in pre-rRNA processing. Utilizes the methyl donor S-adenosyl-L-methionine to catalyze the site-specific 2'-hydroxyl methylation of ribose moieties in pre-ribosomal RNA. Site specificity is provided by a guide RNA that base pairs with the substrate. Methylation occurs at a characteristic distance from the sequence involved in base pairing with the guide RNA. Also acts as a protein methyltransferase by mediating methylation of 'Gln-105' of histone H2A (H2AQ105me), a modification that impairs binding of the FACT complex and is specifically present at 35S ribosomal DNA locus. The polypeptide is rRNA 2'-O-methyltransferase fibrillarin (nop-1) (Neurospora crassa (strain ATCC 24698 / 74-OR23-1A / CBS 708.71 / DSM 1257 / FGSC 987)).